We begin with the raw amino-acid sequence, 788 residues long: MKESAASVAVRPQLREVFERFPADAHRTIEDEIHEMMKCYAFDDAIFLAELHYETDKSNNSESLLLYADCLYRANKKEECYGLLSSVKLSGARLFYLLARVSYDLNKIDDCRGALFEHDDGVIRKDILEEPRVASHANLLHAQMLCDESYMDLALESCQKSLDENILLWSAIITYLRFGGHDLAHTFEKHHRKSNGLYLDSPASSLKSETPSPNVPGPSSSSAASTAEPSRLESSVRRSTRGTIASANRETRNTTSNITPRQSTPGSTPSRINPTAPRKSSRISEMTTRRTESSVTGSRSSLFTEPERPHTRATHSSRNRANAALNSDTENSNASNTRTRSGIASVTRGSSSSQRTNPVRTSIRIADAAAAANKTAKTLSQRRRNEKQPLVSRNSNLARSLSGSTNSVASTASERPSEDEVSQINPPLPSVASSLNNDEPMDIVDGVYDPEYKKLFDVYQHIALIEESISTYNWRSADALFAKLDRDIILNTSMVRLQLGRACFEQSEYRECRNILDDLHKRRKWKVDGTELLSTSMWHLQDTHALSALSQILTTESRERPQSWCAAGNCFSLQRQHTQAIECMERAIQLDKRFAYAYTLLGHELIVQDELDKAAGSFRSALLLSPRDYRAWYGLGLVHLKKEQNLTALTNIQKAVNINPTNRAMLCTLSQIEQQRGQIDTALVLIDRALTLNPLDVACRFNRSRLLFEANRNEECLVELDKLKASSPDEAFIFHLLARVHRRMGNTHLALLNYSWAAELDPRGEQNITDSNVINREEYEDDEYGSPV.

The interval 198–436 (YLDSPASSLK…PLPSVASSLN (239 aa)) is disordered. Positions 217-229 (GPSSSSAASTAEP) are enriched in low complexity. Polar residues-rich tracts occupy residues 241-273 (RGTIASANRETRNTTSNITPRQSTPGSTPSRIN), 293-303 (SSVTGSRSSLF), and 319-360 (NRAN…NPVR). The span at 366 to 378 (ADAAAAANKTAKT) shows a compositional bias: low complexity. A compositionally biased stretch (polar residues) spans 391–414 (VSRNSNLARSLSGSTNSVASTASE). 5 TPR repeats span residues 561–594 (PQSWCAAGNCFSLQRQHTQAIECMERAIQLDKRF), 596–628 (YAYTLLGHELIVQDELDKAAGSFRSALLLSPRD), 629–662 (YRAWYGLGLVHLKKEQNLTALTNIQKAVNINPTN), 664–696 (AMLCTLSQIEQQRGQIDTALVLIDRALTLNPLD), and 731–764 (AFIFHLLARVHRRMGNTHLALLNYSWAAELDPRG).

The protein belongs to the APC3/CDC27 family. As to quaternary structure, the APC/C complex is probably composed of at least 12 subunits: apc-2, apc-10, apc-11, cdc-26, emb-1, emb-27, emb-30, mat-1, mat-2, mat-3, such-1 and gfi-3. In terms of tissue distribution, expressed in the ventral nerve cord.

The protein localises to the nucleus. Its pathway is protein modification; protein ubiquitination. Its function is as follows. Probable component of the anaphase promoting complex/cyclosome (APC/C), a cell cycle-regulated E3 ubiquitin ligase that controls progression through mitosis and the G1 phase of the cell cycle. The APC/C complex acts by mediating ubiquitination and subsequent degradation of target proteins. Developmental role in early embryogenesis and the metaphase to anaphase transition in oocyte and spermatocyte meiosis and mitosis in germ cells. Required for embryonic anterior-posterior axis formation. Plays a role in regulating the abundance of glr-1 receptors in postmitotic neurons, which may in turn control animal locomotion. The chain is Cell division cycle protein 27 homolog from Caenorhabditis elegans.